The following is a 146-amino-acid chain: Large ribosomal subunit protein uL15 (146 aa).

The span at 1-18 (MKLHELKPSEGSRKERNR) shows a compositional bias: basic and acidic residues. Residues 1–50 (MKLHELKPSEGSRKERNRVGRGTGSGNGKTSGRGHKGQKARSGGGVRLGF) are disordered. The span at 21–31 (RGTGSGNGKTS) shows a compositional bias: gly residues.

This sequence belongs to the universal ribosomal protein uL15 family. In terms of assembly, part of the 50S ribosomal subunit.

Functionally, binds to the 23S rRNA. The sequence is that of Large ribosomal subunit protein uL15 from Listeria innocua serovar 6a (strain ATCC BAA-680 / CLIP 11262).